Consider the following 515-residue polypeptide: Histidine ammonia-lyase (515 aa).

A cross-link (5-imidazolinone (Ala-Gly)) is located at residues 145 to 147 (ASG). S146 carries the post-translational modification 2,3-didehydroalanine (Ser).

The protein belongs to the PAL/histidase family. Contains an active site 4-methylidene-imidazol-5-one (MIO), which is formed autocatalytically by cyclization and dehydration of residues Ala-Ser-Gly.

Its subcellular location is the cytoplasm. It catalyses the reaction L-histidine = trans-urocanate + NH4(+). It participates in amino-acid degradation; L-histidine degradation into L-glutamate; N-formimidoyl-L-glutamate from L-histidine: step 1/3. The sequence is that of Histidine ammonia-lyase from Gluconobacter oxydans (strain 621H) (Gluconobacter suboxydans).